The chain runs to 101 residues: Small ribosomal subunit protein uS14 (101 aa).

It belongs to the universal ribosomal protein uS14 family. In terms of assembly, part of the 30S ribosomal subunit. Contacts proteins S3 and S10.

Its function is as follows. Binds 16S rRNA, required for the assembly of 30S particles and may also be responsible for determining the conformation of the 16S rRNA at the A site. The sequence is that of Small ribosomal subunit protein uS14 from Corynebacterium efficiens (strain DSM 44549 / YS-314 / AJ 12310 / JCM 11189 / NBRC 100395).